The chain runs to 42 residues: Photosystem I reaction center subunit IX (42 aa).

A helical transmembrane segment spans residues 7–27 (YLSTAPVLATLWFGFLAGLLI).

Belongs to the PsaJ family.

The protein localises to the plastid. It is found in the chloroplast thylakoid membrane. May help in the organization of the PsaE and PsaF subunits. The chain is Photosystem I reaction center subunit IX from Huperzia lucidula (Shining clubmoss).